The sequence spans 445 residues: Argininosuccinate lyase (445 aa).

Belongs to the lyase 1 family. Argininosuccinate lyase subfamily.

It localises to the cytoplasm. It catalyses the reaction 2-(N(omega)-L-arginino)succinate = fumarate + L-arginine. Its pathway is amino-acid biosynthesis; L-arginine biosynthesis; L-arginine from L-ornithine and carbamoyl phosphate: step 3/3. In Xylella fastidiosa (strain Temecula1 / ATCC 700964), this protein is Argininosuccinate lyase.